The sequence spans 526 residues: MAISLATKAATDALKVNRAPVGVEPQEVHKWLQSFNWDFKENRTKYPTKYHMANETKEQFKVIAKEYARMEAAKDERQFGTLLDGLTRLGAGNKVHPRWGETMKVISNFLEVGEYNAIAASAMLWDSATAAEQKNGYLAQVLDEIRHTHQCAFINHYYSKHYHDPAGHNDARRTRAIGPLWKGMKRVFADGFISGDAVECSVNLQLVGEACFTNPLIVAVTEWASANGDEITPTVFLSVETDELRHMANGYQTVVSIANDPASAKFLNTDLNNAFWTQQKYFTPVLGYLFEYGSKFKVEPWVKTWNRWVYEDWGGIWIGRLGKYGVESPASLRDAKRDAYWAHHDLALAAYAMWPLGFARLALPDEEDQAWFEANYPGWADHYGKIFNEWKKLGYEDPKSGFIPYQWLLANGHDVYIDRVSQVPFIPSLAKGTGSLRVHEFNGKKHSLTDDWGERQWLIEPERYECHNVFEQYEGRELSEVIAEGHGVRSDGKTLIAQPHTRGDNLWTLEDIKRAGCVFPDPLAKF.

Positions 114, 144, and 147 each coordinate Fe cation. The active site involves Cys-151. Fe cation-binding residues include Glu-209, Glu-243, and His-246.

Belongs to the TmoA/XamoA family. M.trichosporium has two forms of methane monooxygenase, a soluble and a membrane-bound type. The soluble type consists of four components (A to D): protein A, comprising three chains, in an alpha-2, beta-2, gamma-2 configuration, is a nonheme iron protein containing an unusual mu-hydroxo bridge structure at its active site and interacts with both oxygen and methane. Fe cation is required as a cofactor.

It catalyses the reaction methane + NADH + O2 + H(+) = methanol + NAD(+) + H2O. It carries out the reaction methane + NADPH + O2 + H(+) = methanol + NADP(+) + H2O. Functionally, responsible for the initial oxygenation of methane to methanol in methanotrophs. It also catalyzes the monohydroxylation of a variety of unactivated alkenes, alicyclic, aromatic and heterocyclic compounds. The protein is Methane monooxygenase component A alpha chain (mmoX) of Methylosinus trichosporium.